Here is a 669-residue protein sequence, read N- to C-terminus: Dymeclin (669 aa).

Gly2 carries N-myristoyl glycine lipidation.

Belongs to the dymeclin family. As to quaternary structure, interacts with GOLM1 and PPIB. In terms of processing, myristoylated in vitro; myristoylation is not essential for protein targeting to Golgi compartment. In terms of tissue distribution, expressed in most embryo-fetal and adult tissues. Abundant in primary chondrocytes, osteoblasts, cerebellum, kidney, lung, stomach, heart, pancreas and fetal brain. Very low or no expression in the spleen, thymus, esophagus, bladder and thyroid gland.

It is found in the cytoplasm. Its subcellular location is the golgi apparatus. The protein localises to the membrane. Functionally, necessary for correct organization of Golgi apparatus. Involved in bone development. In Homo sapiens (Human), this protein is Dymeclin (DYM).